Here is a 63-residue protein sequence, read N- to C-terminus: Large ribosomal subunit protein uL29 (63 aa).

This sequence belongs to the universal ribosomal protein uL29 family.

The polypeptide is Large ribosomal subunit protein uL29 (Herminiimonas arsenicoxydans).